Consider the following 175-residue polypeptide: Protein-export protein SecB (175 aa).

Positions 153 to 163 (QQQPDAANGND) are enriched in polar residues. Residues 153–175 (QQQPDAANGNDSGIILPPGATRQ) are disordered.

This sequence belongs to the SecB family. Homotetramer, a dimer of dimers. One homotetramer interacts with 1 SecA dimer.

The protein localises to the cytoplasm. One of the proteins required for the normal export of preproteins out of the cell cytoplasm. It is a molecular chaperone that binds to a subset of precursor proteins, maintaining them in a translocation-competent state. It also specifically binds to its receptor SecA. This chain is Protein-export protein SecB, found in Bordetella bronchiseptica (strain ATCC BAA-588 / NCTC 13252 / RB50) (Alcaligenes bronchisepticus).